Consider the following 148-residue polypeptide: UPF0756 membrane protein NMCC_1816 (148 aa).

4 helical membrane passes run 13-35 (LILL…LLLM), 50-70 (HGLN…LVSG), 80-100 (FLNF…WLAG), and 121-141 (VIGV…AGIL).

The protein belongs to the UPF0756 family.

The protein resides in the cell membrane. The protein is UPF0756 membrane protein NMCC_1816 of Neisseria meningitidis serogroup C (strain 053442).